The following is a 496-amino-acid chain: Probable cytosol aminopeptidase (496 aa).

2 residues coordinate Mn(2+): Lys258 and Asp263. Residue Lys270 is part of the active site. 3 residues coordinate Mn(2+): Asp281, Asp340, and Glu342. Residue Arg344 is part of the active site.

The protein belongs to the peptidase M17 family. The cofactor is Mn(2+).

It localises to the cytoplasm. The catalysed reaction is Release of an N-terminal amino acid, Xaa-|-Yaa-, in which Xaa is preferably Leu, but may be other amino acids including Pro although not Arg or Lys, and Yaa may be Pro. Amino acid amides and methyl esters are also readily hydrolyzed, but rates on arylamides are exceedingly low.. The enzyme catalyses Release of an N-terminal amino acid, preferentially leucine, but not glutamic or aspartic acids.. Its function is as follows. Presumably involved in the processing and regular turnover of intracellular proteins. Catalyzes the removal of unsubstituted N-terminal amino acids from various peptides. This is Probable cytosol aminopeptidase from Helicobacter pylori (strain P12).